A 398-amino-acid chain; its full sequence is Phosphoglycerate kinase (398 aa).

Substrate-binding positions include 21–23 (DFN), R36, 59–62 (HLGR), R119, and R157. ATP is bound by residues K208, G296, E327, and 354 to 357 (GGDS).

Belongs to the phosphoglycerate kinase family. Monomer.

Its subcellular location is the cytoplasm. The enzyme catalyses (2R)-3-phosphoglycerate + ATP = (2R)-3-phospho-glyceroyl phosphate + ADP. The protein operates within carbohydrate degradation; glycolysis; pyruvate from D-glyceraldehyde 3-phosphate: step 2/5. The protein is Phosphoglycerate kinase of Streptococcus pyogenes serotype M3 (strain ATCC BAA-595 / MGAS315).